Reading from the N-terminus, the 122-residue chain is Basic phospholipase A2 10 (122 aa).

7 disulfide bridges follow: Cys-26–Cys-114, Cys-28–Cys-43, Cys-42–Cys-94, Cys-48–Cys-122, Cys-49–Cys-87, Cys-56–Cys-80, and Cys-74–Cys-85. The Ca(2+) site is built by Tyr-27, Gly-29, and Gly-31. His-46 is a catalytic residue. Asp-47 provides a ligand contact to Ca(2+). Residue Asp-88 is part of the active site.

Ca(2+) serves as cofactor. As to expression, expressed by the venom gland.

The protein resides in the secreted. It carries out the reaction a 1,2-diacyl-sn-glycero-3-phosphocholine + H2O = a 1-acyl-sn-glycero-3-phosphocholine + a fatty acid + H(+). Inhibited by chemical modifications mediated by p-BPB, anhydrous acetic acid and NBSF. Functionally, snake venom phospholipase A2 (PLA2) that has a strong dose-dependent anticoagulant effect. In vivo, intramuscular and intervenal injection causes muscle necrosis. Induces moderate edema in the mouse foot pad. PLA2 catalyzes the calcium-dependent hydrolysis of the 2-acyl groups in 3-sn-phosphoglycerides. The chain is Basic phospholipase A2 10 from Crotalus durissus cumanensis (South American rattlesnake).